A 267-amino-acid polypeptide reads, in one-letter code: NAD kinase 2 (267 aa).

The active-site Proton acceptor is the Asp52. NAD(+) is bound by residues 52–53, 124–125, Arg151, Asp153, 164–169, and Ala188; these read DA, NE, and TAYNKS.

This sequence belongs to the NAD kinase family. A divalent metal cation is required as a cofactor.

It localises to the cytoplasm. The catalysed reaction is NAD(+) + ATP = ADP + NADP(+) + H(+). Its function is as follows. Involved in the regulation of the intracellular balance of NAD and NADP, and is a key enzyme in the biosynthesis of NADP. Catalyzes specifically the phosphorylation on 2'-hydroxyl of the adenosine moiety of NAD to yield NADP. This is NAD kinase 2 from Bacillus cereus (strain ATCC 10987 / NRS 248).